We begin with the raw amino-acid sequence, 141 residues long: Hemoglobin subunit alpha (141 aa).

Residues 1–141 (VLSPADKTNV…VSTVLTSKYR (141 aa)) form the Globin domain. Ser-3 bears the Phosphoserine mark. Lys-7 carries the N6-succinyllysine modification. Phosphothreonine is present on Thr-8. At Lys-11 the chain carries N6-succinyllysine. An N6-acetyllysine; alternate modification is found at Lys-16. Position 16 is an N6-succinyllysine; alternate (Lys-16). Phosphotyrosine is present on Tyr-24. Ser-35 is modified (phosphoserine). At Lys-40 the chain carries N6-succinyllysine. His-58 contacts O2. His-87 serves as a coordination point for heme b. Position 102 is a phosphoserine (Ser-102). Thr-108 bears the Phosphothreonine mark. A phosphoserine mark is found at Ser-124 and Ser-131. A phosphothreonine mark is found at Thr-134 and Thr-137. Phosphoserine is present on Ser-138.

The protein belongs to the globin family. Heterotetramer of two alpha chains and two beta chains. In terms of tissue distribution, red blood cells.

Its function is as follows. Involved in oxygen transport from the lung to the various peripheral tissues. In terms of biological role, hemopressin acts as an antagonist peptide of the cannabinoid receptor CNR1. Hemopressin-binding efficiently blocks cannabinoid receptor CNR1 and subsequent signaling. The sequence is that of Hemoglobin subunit alpha (HBA) from Cynopterus sphinx (Indian short-nosed fruit bat).